Consider the following 282-residue polypeptide: Phospholipid phosphatase 1 (282 aa).

The Cytoplasmic portion of the chain corresponds to 1–6; the sequence is MFDKPR. A PDZ-binding; involved in localization to the apical cell membrane motif is present at residues 5-7; sequence PRL. The chain crosses the membrane as a helical span at residues 7–27; that stretch reads LPYVVLDVICVLLAGLPFIIL. The Extracellular segment spans residues 28-53; the sequence is TSRHTPFQRGVFCTDESIKYPYREDT. Residues 54 to 74 form a helical membrane-spanning segment; sequence IPYALLGGIVIPFCIIVMITG. The Cytoplasmic portion of the chain corresponds to 75-88; that stretch reads ETLSVYFNVLHSNS. A helical membrane pass occupies residues 89 to 109; the sequence is FVSNHYIATIYKAVGAFLFGA. Residues 110–164 are Extracellular-facing; it reads SASQSLTDIAKYSIGRLRPHFLAVCNPDWSKINCSDGYIENFVCQGNEQKVREGR. Residues 120–128 form a phosphatase sequence motif I region; it reads KYSIGRLRP. N-linked (GlcNAc...) asparagine glycosylation occurs at asparagine 142. The helical transmembrane segment at 165–185 threads the bilayer; it reads LSFYSGHSSFSMYCMLFVALY. The tract at residues 168–171 is phosphatase sequence motif II; that stretch reads YSGH. Catalysis depends on histidine 171, which acts as the Proton donors. At 186 to 194 the chain is on the cytoplasmic side; that stretch reads LQARMKGDW. A helical membrane pass occupies residues 195 to 215; the sequence is ARLLRPMLQFGLVALSIYVGL. The phosphatase sequence motif III stretch occupies residues 216 to 227; that stretch reads SRVSDYKHHWSD. Topologically, residues 216 to 229 are extracellular; the sequence is SRVSDYKHHWSDVL. The active-site Nucleophile is the histidine 223. A helical transmembrane segment spans residues 230 to 250; the sequence is IGLIQGAVVAILVVLYVTDFF. Residues 251 to 282 lie on the Cytoplasmic side of the membrane; that stretch reads KTTESNKERKEDSHTTLHETTNRQSYARNHEP. The span at 257–271 shows a compositional bias: basic and acidic residues; sequence KERKEDSHTTLHETT. Positions 257–282 are disordered; it reads KERKEDSHTTLHETTNRQSYARNHEP. Polar residues predominate over residues 272 to 282; that stretch reads NRQSYARNHEP.

Belongs to the PA-phosphatase related phosphoesterase family. In terms of assembly, forms functional homodimers and homooligomers that are not required for substrate recognition and catalytic activity. Can also form heterooligomers with PLPP2 and PLPP3. N-glycosylated. N-linked sugars are of the complex type. N-glycosylation is not required for the phosphatase activity.

It is found in the cell membrane. The protein localises to the apical cell membrane. The protein resides in the membrane raft. Its subcellular location is the membrane. It localises to the caveola. The catalysed reaction is a 1,2-diacyl-sn-glycero-3-phosphate + H2O = a 1,2-diacyl-sn-glycerol + phosphate. It catalyses the reaction 1,2-dihexadecanoyl-sn-glycero-3-phosphate + H2O = 1,2-dihexadecanoyl-sn-glycerol + phosphate. The enzyme catalyses 1,2-di-(9Z-octadecenoyl)-sn-glycero-3-phosphate + H2O = 1,2-di-(9Z-octadecenoyl)-sn-glycerol + phosphate. It carries out the reaction a monoacyl-sn-glycero-3-phosphate + H2O = a monoacylglycerol + phosphate. The catalysed reaction is (9Z)-octadecenoyl-sn-glycero-3-phosphate + H2O = (9Z-octadecenoyl)-glycerol + phosphate. It catalyses the reaction a 1-acyl-sn-glycero-3-phosphate + H2O = a 1-acyl-sn-glycerol + phosphate. The enzyme catalyses 1-(9Z-octadecenoyl)-sn-glycero-3-phosphate + H2O = 1-(9Z-octadecenoyl)-sn-glycerol + phosphate. It carries out the reaction a 1,2-diacyl-sn-glycerol 3-diphosphate + H2O = a 1,2-diacyl-sn-glycero-3-phosphate + phosphate + H(+). The catalysed reaction is sphing-4-enine 1-phosphate + H2O = sphing-4-enine + phosphate. It catalyses the reaction an N-acylsphing-4-enine 1-phosphate + H2O = an N-acylsphing-4-enine + phosphate. The enzyme catalyses N-(octanoyl)-sphing-4-enine-1-phosphate + H2O = N-octanoylsphing-4-enine + phosphate. It carries out the reaction N-(9Z-octadecenoyl)-ethanolamine phosphate + H2O = N-(9Z-octadecenoyl) ethanolamine + phosphate. The catalysed reaction is 1-hexadecanoyl-2-(9Z-octadecenoyl)-sn-glycero-3-phosphate + H2O = 1-hexadecanoyl-2-(9Z-octadecenoyl)-sn-glycerol + phosphate. It functions in the pathway lipid metabolism; phospholipid metabolism. Magnesium-independent phospholipid phosphatase. Insensitive to N-ethylmaleimide. Magnesium-independent phospholipid phosphatase of the plasma membrane that catalyzes the dephosphorylation of a variety of glycerolipid and sphingolipid phosphate esters including phosphatidate/PA, lysophosphatidate/LPA, diacylglycerol pyrophosphate/DGPP, sphingosine 1-phosphate/S1P and ceramide 1-phosphate/C1P. Also acts on N-oleoyl ethanolamine phosphate/N-(9Z-octadecenoyl)-ethanolamine phosphate, a potential physiological compound. Through its extracellular phosphatase activity allows both the hydrolysis and the cellular uptake of these bioactive lipid mediators from the milieu, regulating signal transduction in different cellular processes. It is for instance essential for the extracellular hydrolysis of S1P and subsequent conversion into intracellular S1P. Involved in the regulation of inflammation, platelets activation, cell proliferation and migration among other processes. May also have an intracellular activity to regulate phospholipid-mediated signaling pathways. This Rattus norvegicus (Rat) protein is Phospholipid phosphatase 1.